Consider the following 308-residue polypeptide: Glutaminase 2 (308 aa).

Substrate-binding residues include S66, N117, E161, N168, Y192, Y244, and V262.

The protein belongs to the glutaminase family. In terms of assembly, homotetramer.

The enzyme catalyses L-glutamine + H2O = L-glutamate + NH4(+). This is Glutaminase 2 from Escherichia coli O157:H7.